The chain runs to 149 residues: Urease accessory protein UreE (149 aa).

The protein belongs to the UreE family.

It localises to the cytoplasm. Functionally, involved in urease metallocenter assembly. Binds nickel. Probably functions as a nickel donor during metallocenter assembly. This chain is Urease accessory protein UreE, found in Corynebacterium efficiens (strain DSM 44549 / YS-314 / AJ 12310 / JCM 11189 / NBRC 100395).